The chain runs to 315 residues: Small ribosomal subunit protein uS2 (315 aa).

The segment at 250–315 (LLEQGDAAKA…TESEKAPVSE (66 aa)) is disordered. Composition is skewed to basic and acidic residues over residues 272–282 (VSAKNEAKSED) and 297–315 (TEAK…PVSE).

This sequence belongs to the universal ribosomal protein uS2 family.

The polypeptide is Small ribosomal subunit protein uS2 (Clavibacter michiganensis subsp. michiganensis (strain NCPPB 382)).